A 143-amino-acid chain; its full sequence is Probable glycine cleavage system H protein (143 aa).

Residues 36–118 form the Lipoyl-binding domain; it reads VATVGITDFA…YGEGWIFKIK (83 aa). Lys77 is subject to N6-lipoyllysine.

The protein belongs to the GcvH family. In terms of assembly, the glycine cleavage system is composed of four proteins: P, T, L and H. The cofactor is (R)-lipoate.

The glycine cleavage system catalyzes the degradation of glycine. The H protein shuttles the methylamine group of glycine from the P protein to the T protein. This is Probable glycine cleavage system H protein from Aeropyrum pernix (strain ATCC 700893 / DSM 11879 / JCM 9820 / NBRC 100138 / K1).